A 484-amino-acid chain; its full sequence is uncharacterized protein (484 aa).

12 helical membrane-spanning segments follow: residues 19-39 (LSFG…MIFV), 78-98 (VNWG…WLIV), 110-130 (LFFM…GFII), 134-154 (IFAI…SNYL), 165-185 (FSPF…AGII), 199-219 (IVFL…IILG), 249-269 (TWYW…PFTF), 289-309 (ISVF…TIGL), 321-341 (ISTI…VFVL), 360-380 (LFLF…GVML), 398-418 (FGLI…ITSL), and 440-460 (LGAY…LALL).

The protein resides in the cell membrane. This is an uncharacterized protein from Mesomycoplasma hyopneumoniae (strain J / ATCC 25934 / NCTC 10110) (Mycoplasma hyopneumoniae).